Here is a 415-residue protein sequence, read N- to C-terminus: Putative transcription factor BOFH (415 aa).

Residues S159–D221 form a disordered region. Gly residues predominate over residues I174 to W183. Residues Q193 to L202 are compositionally biased toward basic residues. A compositionally biased stretch (acidic residues) spans E206 to M220. 3 consecutive DNA-binding regions follow at residues R234 to F238, N303 to Y310, and Y374 to T377.

Belongs to the FLO/LFY family. Acts in the floral primordia.

It is found in the nucleus. In terms of biological role, controls floral meristem identity. Is required very early in flower development and may act here as a transcription factor. The sequence is that of Putative transcription factor BOFH from Brassica oleracea var. botrytis (Cauliflower).